The sequence spans 971 residues: Breast cancer type 2 susceptibility protein homolog (971 aa).

The span at 1 to 15 (MDQNGASGSHPNRLS) shows a compositional bias: polar residues. Disordered stretches follow at residues 1–30 (MDQN…ATVS), 130–155 (SRKR…LSVQ), 349–395 (KLKL…DQPN), and 420–466 (MQCS…SSHQ). Positions 130-139 (SRKRDPKSHK) are enriched in basic residues. Basic and acidic residues predominate over residues 349–364 (KLKLEPSSQKEQKSSK). Polar residues-rich tracts occupy residues 375 to 392 (SKQS…TILD), 420 to 432 (MQCS…SKNA), and 453 to 466 (KQTP…SSHQ). 3 BRCA2 repeats span residues 570 to 604 (AEPE…EFQS), 671 to 705 (NESQ…QSKA), and 746 to 780 (SETE…EFQA). The segment at 916-971 (MERFAPKPSSTSTPLADRDLNRSKDCTKNRQDAEDMSPICMQPKKSRRLGLSRSRY) is disordered. A compositionally biased stretch (basic and acidic residues) spans 931-948 (ADRDLNRSKDCTKNRQDA). Positions 959–971 (KKSRRLGLSRSRY) are enriched in basic residues.

In terms of assembly, interacts with Rad9. Interacts with spn-A/Rad51. Interacts with cyclin CycG.

It is found in the nucleus. Functionally, involved in and required for double-strand break repair by meiotic and mitotic homologous recombination. During meiosis, has a dual role in the repair of meiotic double-stranded breaks and the efficient activation of the meiotic recombination checkpoint. The protein is Breast cancer type 2 susceptibility protein homolog of Drosophila melanogaster (Fruit fly).